Reading from the N-terminus, the 183-residue chain is Transcription termination/antitermination protein NusG (183 aa).

The 31-residue stretch at 131-161 folds into the KOW domain; sequence PGEEVRVTEGPFADFNGTVEEVDYEKGRLKV.

Belongs to the NusG family.

Functionally, participates in transcription elongation, termination and antitermination. The sequence is that of Transcription termination/antitermination protein NusG from Pasteurella multocida (strain Pm70).